Consider the following 589-residue polypeptide: Transmembrane 9 superfamily member 5 (589 aa).

A signal peptide spans 1 to 24 (MAQFLLTVLQVLLALTFWIGIGSG). Residues 25–227 (SSNHYNAGDH…SFHPISQKIH (203 aa)) lie on the Lumenal side of the membrane. The chain crosses the membrane as a helical span at residues 228-248 (FFSFLNSITVVVLLIGLISFL). Residues 249–291 (FMRHLKNELRSYSIGDEEERKEAGWKLVHSDVFRCPRNISWLC) are Cytoplasmic-facing. The helical transmembrane segment at 292 to 312 (AILGTGTQLLILIIALFALAF) threads the bilayer. Over 313-321 (TGFLYPYNR) the chain is Lumenal. A helical membrane pass occupies residues 322 to 342 (GMLLTSLVIMYTLTSIVAGYT). Residues 343 to 361 (STSFHSQFEGNKQKRSVRL) are Cytoplasmic-facing. A helical membrane pass occupies residues 362 to 382 (AGILYPVPFFIILSVLNTVAI). Residues 383–394 (TYGATAALPFGT) lie on the Lumenal side of the membrane. Residues 395–415 (IVIIILIFTLLNIPFLMLGGV) form a helical membrane-spanning segment. The Cytoplasmic portion of the chain corresponds to 416 to 450 (LGNRFGLLEFQPPSAVKRNPREIPPQNWYRRKLYQ). A helical membrane pass occupies residues 451–471 (VFLGGFVPFSAVVLEWHQLYA). The Lumenal segment spans residues 472-482 (SLWGFKIYTSP). A helical membrane pass occupies residues 483–503 (GIMLFTFIVLIFLSSSVGIIL). Residues 504–518 (TYIQLSGEDHEWWWR) lie on the Cytoplasmic side of the membrane. The helical transmembrane segment at 519–539 (SILCGGFTAVFMYGYGVLFYL) threads the bilayer. Residues 540–550 (RSDMTGFLQLS) are Lumenal-facing. The chain crosses the membrane as a helical span at residues 551 to 571 (FYLGYTALLCYALFLVLGTIS). The Cytoplasmic segment spans residues 572–589 (FLASLMFIRHIYRSVKLE). The Endoplasmic reticulum export signal motif lies at 578–583 (FIRHIY). Residues 587–589 (KLE) carry the Golgi retention signal motif.

It belongs to the nonaspanin (TM9SF) (TC 9.A.2) family. Expressed in the root cap and in giant cells.

Its subcellular location is the endosome membrane. It is found in the golgi apparatus membrane. The chain is Transmembrane 9 superfamily member 5 from Arabidopsis thaliana (Mouse-ear cress).